The primary structure comprises 118 residues: Large ribosomal subunit protein bL20 (118 aa).

The protein belongs to the bacterial ribosomal protein bL20 family.

Its function is as follows. Binds directly to 23S ribosomal RNA and is necessary for the in vitro assembly process of the 50S ribosomal subunit. It is not involved in the protein synthesizing functions of that subunit. In Thermosipho melanesiensis (strain DSM 12029 / CIP 104789 / BI429), this protein is Large ribosomal subunit protein bL20.